Reading from the N-terminus, the 299-residue chain is MPQPYPFGRVITAMITPFNAEGQVAYDIAQSLAVHLVEQGSDGLVICGTTGESPTLTWEEELQLFRAVKEAVGDRAAVIAGTGSNCTREAIAATQSAATLGLNGSLQVVPYYNKPPQEGLYAHFRAIAEACPDLPLMLYNIPGRTGQSLQPETVARLASLPNVVAIKAASGNVEEVSALRQLLPDSFAIYSGDDSLTLPMLAVGAQGVVSVASHLVGPQLQALIQAFEAGNVARAQQLHHQLYPLFKALFLTTNPIPVRAAMELLGWSIGLPRLPLVPASAEIRQALASCLTELGLYTA.

Thr50 is a binding site for pyruvate. Tyr139 acts as the Proton donor/acceptor in catalysis. Lys167 acts as the Schiff-base intermediate with substrate in catalysis. Val209 is a pyruvate binding site.

It belongs to the DapA family. In terms of assembly, homotetramer; dimer of dimers.

It localises to the cytoplasm. It catalyses the reaction L-aspartate 4-semialdehyde + pyruvate = (2S,4S)-4-hydroxy-2,3,4,5-tetrahydrodipicolinate + H2O + H(+). The protein operates within amino-acid biosynthesis; L-lysine biosynthesis via DAP pathway; (S)-tetrahydrodipicolinate from L-aspartate: step 3/4. Functionally, catalyzes the condensation of (S)-aspartate-beta-semialdehyde [(S)-ASA] and pyruvate to 4-hydroxy-tetrahydrodipicolinate (HTPA). In Synechococcus elongatus (strain ATCC 33912 / PCC 7942 / FACHB-805) (Anacystis nidulans R2), this protein is 4-hydroxy-tetrahydrodipicolinate synthase.